The chain runs to 489 residues: Glycogen synthase (489 aa).

R20 contacts ADP-alpha-D-glucose.

Belongs to the glycosyltransferase 1 family. Bacterial/plant glycogen synthase subfamily.

It catalyses the reaction [(1-&gt;4)-alpha-D-glucosyl](n) + ADP-alpha-D-glucose = [(1-&gt;4)-alpha-D-glucosyl](n+1) + ADP + H(+). Its pathway is glycan biosynthesis; glycogen biosynthesis. Functionally, synthesizes alpha-1,4-glucan chains using ADP-glucose. This Chlorobium phaeovibrioides (strain DSM 265 / 1930) (Prosthecochloris vibrioformis (strain DSM 265)) protein is Glycogen synthase.